The primary structure comprises 501 residues: Sucrose transport protein SUT2 (501 aa).

The Cytoplasmic portion of the chain corresponds to 1-31; it reads MPRRPSGGGGGAGPAAAAVRKVPLRKLLRAA. A helical transmembrane segment spans residues 32–52; the sequence is SVACGVQFGWALQLSLLTPYV. The Extracellular portion of the chain corresponds to 53–55; the sequence is QEL. The chain crosses the membrane as a helical span at residues 56-76; it reads GIPHAFASLVWLCGPLSGLLV. At 77 to 98 the chain is on the cytoplasmic side; it reads QPLVGHLSDRIAPAASPLGRRR. The chain crosses the membrane as a helical span at residues 99–119; the sequence is PFIAAGAASIAAAVLTVGFSA. Over 120 to 135 the chain is Extracellular; the sequence is DLGRIFGDSITPGSTR. Residues 136 to 156 traverse the membrane as a helical segment; the sequence is LGAIIVYLVGFWLLDVGNNAT. Topologically, residues 157-176 are cytoplasmic; the sequence is QGPCRAFLADLTENDPRRTR. A helical membrane pass occupies residues 177–197; that stretch reads IANAYFSLFMALGNILGYATG. Residues 198–222 lie on the Extracellular side of the membrane; the sequence is AYSGWYKIFPFTVTPSCSISCANLK. A helical transmembrane segment spans residues 223-243; sequence SAFLLDIIILVVTTCITVASV. The Cytoplasmic segment spans residues 244 to 278; the sequence is QEPQSLGSDEADHPSTEQEAFLWELFGSFRYFTLP. The chain crosses the membrane as a helical span at residues 279–299; it reads VWMVLIVTALTWIGWFPFILF. Over 300–327 the chain is Extracellular; it reads DTDWMGREIYRGSPDDPSITQSYHDGVR. A helical transmembrane segment spans residues 328–348; the sequence is MGSFGLMLNSVLLGFTSIVLE. Topologically, residues 349–356 are cytoplasmic; the sequence is KLCRKWGA. A helical membrane pass occupies residues 357 to 377; the sequence is GLVWGVSNILMALCFVAMLVI. Residues 378–394 are Extracellular-facing; sequence TYVAKNMDYPPSGVPPT. The chain crosses the membrane as a helical span at residues 395–415; sequence GIVIASLVVFTILGAPLAITY. Over 416–433 the chain is Cytoplasmic; sequence SIPYAMAASRVENLGLGQ. A helical transmembrane segment spans residues 434–454; the sequence is GLAMGILNLAIVIPQVIVSLG. Residues 455–467 are Extracellular-facing; it reads SGPWDQLFGGGNA. A helical membrane pass occupies residues 468-488; sequence PAFAVAAAASFIGGLVAILGL. Residues 489-501 lie on the Cytoplasmic side of the membrane; it reads PRARIASRRRGHR.

Belongs to the glycoside-pentoside-hexuronide (GPH) cation symporter transporter (TC 2.A.2.4) family. Homodimer. As to expression, expressed in source leaf blades.

Its subcellular location is the cell membrane. The protein operates within glycan biosynthesis; sucrose metabolism. Functionally, responsible for the transport of sucrose into the cell, with the concomitant uptake of protons (symport system). May also transport other glucosides. This Oryza sativa subsp. indica (Rice) protein is Sucrose transport protein SUT2 (SUT2).